An 866-amino-acid chain; its full sequence is N-alpha-acetyltransferase 15, NatA auxiliary subunit (866 aa).

4 TPR repeats span residues 46-79 (GETL…DLKS), 80-113 (HVCW…DKDN), 148-184 (RASW…SPDK), and 224-257 (LAVE…NPEN). N6-acetyllysine is present on K262. S302 bears the Phosphoserine mark. TPR repeat units lie at residues 374–407 (LWVQ…TPTL), 409–441 (ELFL…DTAD), and 485–522 (MWFQ…TDDQ). The interaction with HYPK stretch occupies residues 500–866 (KFGEALKKCY…AEAEELANEI (367 aa)). Phosphoserine is present on residues S537 and S588. Residues 579–594 (EHEADTANMSDKELKK) show a composition bias toward basic and acidic residues. The tract at residues 579 to 642 (EHEADTANMS…EEIGGPKEEL (64 aa)) is disordered. Over residues 595–604 (LRNKQRRAQK) the composition is skewed to basic residues. Over residues 606-621 (AQIEEEKKNAEKEKQQ) the composition is skewed to basic and acidic residues. The TPR 8 repeat unit spans residues 672-705 (IETHLFAFEIYFRKEKFLLMLQSVKRAFAIDSSH). Residues K735 and K756 each carry the N6-acetyllysine modification. S855 and S856 each carry phosphoserine.

As to quaternary structure, component of the N-terminal acetyltransferase A (NatA) complex composed of NAA10 or probably NAA11 and NAA15. Interacts with XRCC6, NAA50 and XRCC5. Associates with HYPK when in a complex with NAA10. Interaction with HYPK reduces the capacity to interact with NAA50. Post-translationally, cleaved by caspases during apoptosis.

The protein localises to the cytoplasm. It localises to the nucleus. In terms of biological role, auxillary subunit of the N-terminal acetyltransferase A (NatA) complex which displays alpha (N-terminal) acetyltransferase activity. The NAT activity may be important for vascular, hematopoietic and neuronal growth and development. Required to control retinal neovascularization in adult ocular endothelial cells. In complex with XRCC6 and XRCC5 (Ku80), up-regulates transcription from the osteocalcin promoter. In Pongo abelii (Sumatran orangutan), this protein is N-alpha-acetyltransferase 15, NatA auxiliary subunit (NAA15).